We begin with the raw amino-acid sequence, 295 residues long: Polyisoprenoid diphosphate/phosphate phosphohydrolase PLPP6 (295 aa).

Disordered regions lie at residues 1–39 and 61–90; these read MPSP…SRFE and SESP…PEED. Residues 1 to 132 are Cytoplasmic-facing; the sequence is MPSPRRSMEG…ESSSWGSVRP (132 aa). The span at 16-27 shows a compositional bias: low complexity; it reads SASSSSSSPGSP. Residues serine 26, serine 36, and serine 70 each carry the phosphoserine modification. A helical membrane pass occupies residues 133–153; the sequence is LMKLLEISGHGIPWLLGTLYC. Residues 154–164 are Lumenal-facing; it reads LCRSDSWAGRE. Residues 165 to 185 form a helical membrane-spanning segment; it reads VLMNLLFALLLDLLLVALIKG. Positions 184–192 are phosphatase sequence motif I; sequence KGLVRRRRP. Topologically, residues 186-228 are cytoplasmic; the sequence is LVRRRRPAHNQMDMFVTLSVDKYSFPSGHATRAALMSRFILNH. The phosphatase sequence motif II stretch occupies residues 211–214; that stretch reads PSGH. The Proton donors role is filled by histidine 214. Residues 229–249 form a helical membrane-spanning segment; sequence LVLAIPLRVLVVLWAFVLGLS. The tract at residues 249–260 is phosphatase sequence motif III; the sequence is SRVMLGRHNVTD. Residues 250 to 260 lie on the Lumenal side of the membrane; sequence RVMLGRHNVTD. Histidine 256 acts as the Nucleophile in catalysis. A helical membrane pass occupies residues 261–281; it reads VAFGFFLGYMQYSIVDYCWLS. At 282–295 the chain is on the cytoplasmic side; the sequence is PHNAPVLFLLWSQR.

It belongs to the PA-phosphatase related phosphoesterase family. Phosphorylation by PKC activates the phosphatase activity towards presqualene diphosphate. In terms of tissue distribution, widely expressed. Expressed in most organs, in particular gastrointestinal organs, spleen, placenta, kidney, thymus and brain.

It is found in the endoplasmic reticulum membrane. The protein resides in the nucleus envelope. Its subcellular location is the nucleus inner membrane. It catalyses the reaction presqualene diphosphate + H2O = presqualene phosphate + phosphate + H(+). It carries out the reaction presqualene phosphate + H2O = presqualene alcohol + phosphate. The catalysed reaction is (2E,6E)-farnesyl diphosphate + H2O = (2E,6E)-farnesyl phosphate + phosphate + H(+). The enzyme catalyses (2E,6E)-farnesyl phosphate + H2O = (2E,6E)-farnesol + phosphate. It catalyses the reaction (2E,6E,10E)-geranylgeranyl diphosphate + H2O = (2E,6E,10E)-geranylgeranyl phosphate + phosphate + H(+). It carries out the reaction (2E,6E,10E)-geranylgeranyl phosphate + H2O = (2E,6E,10E)-geranylgeraniol + phosphate. The catalysed reaction is (2E)-geranyl diphosphate + H2O = (2E)-geranyl phosphate + phosphate + H(+). The enzyme catalyses (2E)-geranyl phosphate + H2O = (2E)-geraniol + phosphate. It catalyses the reaction 1,2-dihexadecanoyl-sn-glycero-3-phosphate + H2O = 1,2-dihexadecanoyl-sn-glycerol + phosphate. Inhibited by propranolol. Not inhibited by N-ethylmaleimide or bromoenolactome. Magnesium-independent polyisoprenoid diphosphatase that catalyzes the sequential dephosphorylation of presqualene, farnesyl, geranyl and geranylgeranyl diphosphates. Functions in the innate immune response through the dephosphorylation of presqualene diphosphate which acts as a potent inhibitor of the signaling pathways contributing to polymorphonuclear neutrophils activation. May regulate the biosynthesis of cholesterol and related sterols by dephosphorylating presqualene and farnesyl diphosphate, two key intermediates in this biosynthetic pathway. May also play a role in protein prenylation by acting on farnesyl diphosphate and its derivative geranylgeranyl diphosphate, two precursors for the addition of isoprenoid anchors to membrane proteins. Has a lower activity towards phosphatidic acid (PA), but through phosphatidic acid dephosphorylation may participate in the biosynthesis of phospholipids and triacylglycerols. May also act on ceramide-1-P, lysophosphatidic acid (LPA) and sphing-4-enine 1-phosphate/sphingosine-1-phosphate. This Homo sapiens (Human) protein is Polyisoprenoid diphosphate/phosphate phosphohydrolase PLPP6.